Here is a 214-residue protein sequence, read N- to C-terminus: Phosphatidylcholine transfer protein (214 aa).

Met1 carries the post-translational modification N-acetylmethionine. In terms of domain architecture, START spans 1-212 (MELAAGSFSE…MARACQNYLK (212 aa)). The a 1,2-diacyl-sn-glycero-3-phosphocholine site is built by Tyr72 and Arg78. At Ser139 the chain carries Phosphoserine. Residue Gln157 coordinates a 1,2-diacyl-sn-glycero-3-phosphocholine.

In terms of assembly, interacts with ACOT13/THEM2. As to expression, highest expression in liver, placenta, testis, kidney and heart. Low levels in brain and lung. No expression detected in thymus.

The protein localises to the cytoplasm. In terms of biological role, catalyzes the transfer of phosphatidylcholine between membranes. Binds a single lipid molecule. This is Phosphatidylcholine transfer protein (PCTP) from Homo sapiens (Human).